The sequence spans 29 residues: Cytochrome c oxidase subunit 7A2, mitochondrial (29 aa).

Lys10 bears the N6-acetyllysine mark.

The protein belongs to the cytochrome c oxidase VIIa family. In terms of assembly, component of the cytochrome c oxidase (complex IV, CIV), a multisubunit enzyme composed of 14 subunits. The complex is composed of a catalytic core of 3 subunits MT-CO1, MT-CO2 and MT-CO3, encoded in the mitochondrial DNA, and 11 supernumerary subunits COX4I, COX5A, COX5B, COX6A, COX6B, COX6C, COX7A, COX7B, COX7C, COX8 and NDUFA4, which are encoded in the nuclear genome. The complex exists as a monomer or a dimer and forms supercomplexes (SCs) in the inner mitochondrial membrane with NADH-ubiquinone oxidoreductase (complex I, CI) and ubiquinol-cytochrome c oxidoreductase (cytochrome b-c1 complex, complex III, CIII), resulting in different assemblies (supercomplex SCI(1)III(2)IV(1) and megacomplex MCI(2)III(2)IV(2)). Interacts with PET100.

It is found in the mitochondrion inner membrane. It functions in the pathway energy metabolism; oxidative phosphorylation. Functionally, component of the cytochrome c oxidase, the last enzyme in the mitochondrial electron transport chain which drives oxidative phosphorylation. The respiratory chain contains 3 multisubunit complexes succinate dehydrogenase (complex II, CII), ubiquinol-cytochrome c oxidoreductase (cytochrome b-c1 complex, complex III, CIII) and cytochrome c oxidase (complex IV, CIV), that cooperate to transfer electrons derived from NADH and succinate to molecular oxygen, creating an electrochemical gradient over the inner membrane that drives transmembrane transport and the ATP synthase. Cytochrome c oxidase is the component of the respiratory chain that catalyzes the reduction of oxygen to water. Electrons originating from reduced cytochrome c in the intermembrane space (IMS) are transferred via the dinuclear copper A center (CU(A)) of subunit 2 and heme A of subunit 1 to the active site in subunit 1, a binuclear center (BNC) formed by heme A3 and copper B (CU(B)). The BNC reduces molecular oxygen to 2 water molecules using 4 electrons from cytochrome c in the IMS and 4 protons from the mitochondrial matrix. The polypeptide is Cytochrome c oxidase subunit 7A2, mitochondrial (COX7A2) (Canis lupus familiaris (Dog)).